The primary structure comprises 209 residues: Orotate phosphoribosyltransferase (209 aa).

Residues arginine 96, lysine 100, histidine 102, and 122–130 each bind 5-phospho-alpha-D-ribose 1-diphosphate; that span reads EDLISTGGS. Position 126 (serine 126) interacts with orotate.

The protein belongs to the purine/pyrimidine phosphoribosyltransferase family. PyrE subfamily. In terms of assembly, homodimer. The cofactor is Mg(2+).

The catalysed reaction is orotidine 5'-phosphate + diphosphate = orotate + 5-phospho-alpha-D-ribose 1-diphosphate. Its pathway is pyrimidine metabolism; UMP biosynthesis via de novo pathway; UMP from orotate: step 1/2. Catalyzes the transfer of a ribosyl phosphate group from 5-phosphoribose 1-diphosphate to orotate, leading to the formation of orotidine monophosphate (OMP). This is Orotate phosphoribosyltransferase from Streptococcus pyogenes serotype M1.